Here is a 277-residue protein sequence, read N- to C-terminus: Uracil phosphoribosyltransferase homolog (277 aa).

A disordered region spans residues 1-69; sequence MEAMPCHNQR…AAAPSPAAED (69 aa). Residues 37-69 are compositionally biased toward low complexity; it reads AEPSEGSSSGSPSPDSSSGSNGAAAAPSPAAED. GTP is bound by residues Arg-101, Arg-110, and 144–147; that span reads EKGN. 5-phospho-alpha-D-ribose 1-diphosphate is bound at residue Arg-154. GTP-binding residues include Arg-171 and Arg-200. 206 to 214 contacts 5-phospho-alpha-D-ribose 1-diphosphate; the sequence is YPILSTGNT. 267 to 269 is a binding site for uracil; sequence THF.

The protein belongs to the UPRTase family.

It is found in the cytoplasm. The protein localises to the nucleus. This chain is Uracil phosphoribosyltransferase homolog (UPRT), found in Gallus gallus (Chicken).